The following is an 863-amino-acid chain: DNA mismatch repair protein MutS (863 aa).

ATP is bound at residue 607 to 614; sequence GPNMAGKS.

This sequence belongs to the DNA mismatch repair MutS family.

Its function is as follows. This protein is involved in the repair of mismatches in DNA. It is possible that it carries out the mismatch recognition step. This protein has a weak ATPase activity. This is DNA mismatch repair protein MutS from Caldicellulosiruptor bescii (strain ATCC BAA-1888 / DSM 6725 / KCTC 15123 / Z-1320) (Anaerocellum thermophilum).